The sequence spans 420 residues: D-tagatose-1,6-bisphosphate aldolase subunit GatZ (420 aa).

It belongs to the GatZ/KbaZ family. GatZ subfamily. Forms a complex with GatY.

It participates in carbohydrate metabolism; D-tagatose 6-phosphate degradation; D-glyceraldehyde 3-phosphate and glycerone phosphate from D-tagatose 6-phosphate: step 2/2. Its function is as follows. Component of the tagatose-1,6-bisphosphate aldolase GatYZ that is required for full activity and stability of the Y subunit. Could have a chaperone-like function for the proper and stable folding of GatY. When expressed alone, GatZ does not show any aldolase activity. Is involved in the catabolism of galactitol. The sequence is that of D-tagatose-1,6-bisphosphate aldolase subunit GatZ from Shigella flexneri serotype 5b (strain 8401).